Reading from the N-terminus, the 231-residue chain is MAVSELEVDGVVFPPLARPPGSAHAHFLAGAGVRGMEIGGHFIKFTAIGVYLQADAAVSALAAKWAGKPAADLASDAAFFRDVVTGEFEKFTRVTMILPLTGAQYSDKVTENCVAYWKAAGVYTDAEAAAVDKFKEAFGPHSFAPGASILFTHSPAGVLTVAFSKDSSVPESGGVAIENARLCEAVLESIIGEHGVSPAAKLSLANRVAELLKGAAHAGGEPAAEPVPVSV.

3 residues coordinate substrate: threonine 46, asparagine 112, and serine 189.

It belongs to the chalcone isomerase family.

The catalysed reaction is a chalcone = a flavanone.. Its pathway is secondary metabolite biosynthesis; flavonoid biosynthesis. Catalyzes the intramolecular cyclization of bicyclic chalcones into tricyclic (S)-flavanones. Responsible for the isomerization of 4,2',4',6'-tetrahydroxychalcone (also termed chalcone) into naringenin. This Hordeum vulgare (Barley) protein is Chalcone--flavanone isomerase (CHI).